We begin with the raw amino-acid sequence, 196 residues long: Peptidyl-tRNA hydrolase (196 aa).

Tyrosine 17 contacts tRNA. Histidine 22 functions as the Proton acceptor in the catalytic mechanism. TRNA-binding residues include phenylalanine 68, asparagine 70, and asparagine 116.

It belongs to the PTH family. In terms of assembly, monomer.

It is found in the cytoplasm. The catalysed reaction is an N-acyl-L-alpha-aminoacyl-tRNA + H2O = an N-acyl-L-amino acid + a tRNA + H(+). Functionally, hydrolyzes ribosome-free peptidyl-tRNAs (with 1 or more amino acids incorporated), which drop off the ribosome during protein synthesis, or as a result of ribosome stalling. Its function is as follows. Catalyzes the release of premature peptidyl moieties from peptidyl-tRNA molecules trapped in stalled 50S ribosomal subunits, and thus maintains levels of free tRNAs and 50S ribosomes. This is Peptidyl-tRNA hydrolase from Yersinia pseudotuberculosis serotype O:1b (strain IP 31758).